The chain runs to 244 residues: Carbonic anhydrase (244 aa).

Residues 1–19 (MKGKFSIALMLSACFSASA) form the signal peptide. In terms of domain architecture, Alpha-carbonic anhydrase spans 23 to 244 (VHWGYEGSGD…QPLNGRIIIH (222 aa)). Cysteines 46 and 199 form a disulfide. Histidine 84 serves as the catalytic Proton acceptor. Zn(2+) contacts are provided by histidine 109, histidine 111, and histidine 128. 195–196 (TT) serves as a coordination point for substrate.

Belongs to the alpha-carbonic anhydrase family. Zn(2+) is required as a cofactor.

The protein resides in the periplasm. The catalysed reaction is hydrogencarbonate + H(+) = CO2 + H2O. Reversible hydration of carbon dioxide. The sequence is that of Carbonic anhydrase (cah) from Pectobacterium atrosepticum (strain SCRI 1043 / ATCC BAA-672) (Erwinia carotovora subsp. atroseptica).